Consider the following 368-residue polypeptide: Homoserine O-acetyltransferase (368 aa).

An AB hydrolase-1 domain is found at 43-346; that stretch reads ILLEHALTGT…EYGHDAFLVE (304 aa). The active-site Nucleophile is S145. Residue R212 participates in substrate binding. Residues D307 and H340 contribute to the active site. Substrate is bound at residue D341.

This sequence belongs to the AB hydrolase superfamily. MetX family. Homodimer.

It is found in the cytoplasm. It catalyses the reaction L-homoserine + acetyl-CoA = O-acetyl-L-homoserine + CoA. The protein operates within amino-acid biosynthesis; L-methionine biosynthesis via de novo pathway; O-acetyl-L-homoserine from L-homoserine: step 1/1. Its function is as follows. Transfers an acetyl group from acetyl-CoA to L-homoserine, forming acetyl-L-homoserine. This is Homoserine O-acetyltransferase from Listeria monocytogenes serovar 1/2a (strain ATCC BAA-679 / EGD-e).